The primary structure comprises 352 residues: Quinolinate synthase (352 aa).

The iminosuccinate site is built by His48 and Ser69. Residue Cys114 coordinates [4Fe-4S] cluster. Residues 140 to 142 and Ser157 contribute to the iminosuccinate site; that span reads YAN. Residue Cys201 coordinates [4Fe-4S] cluster. Residues 227–229 and Thr244 contribute to the iminosuccinate site; that span reads HPE. Cys298 serves as a coordination point for [4Fe-4S] cluster.

This sequence belongs to the quinolinate synthase family. Type 1 subfamily. [4Fe-4S] cluster serves as cofactor.

The protein resides in the cytoplasm. It catalyses the reaction iminosuccinate + dihydroxyacetone phosphate = quinolinate + phosphate + 2 H2O + H(+). It functions in the pathway cofactor biosynthesis; NAD(+) biosynthesis; quinolinate from iminoaspartate: step 1/1. Functionally, catalyzes the condensation of iminoaspartate with dihydroxyacetone phosphate to form quinolinate. The protein is Quinolinate synthase of Pseudomonas fluorescens (strain Pf0-1).